The following is a 301-amino-acid chain: Homoserine kinase (301 aa).

An ATP-binding site is contributed by 89–99; it reads KPGSGLGSSSA.

It belongs to the GHMP kinase family. Homoserine kinase subfamily.

It is found in the cytoplasm. The catalysed reaction is L-homoserine + ATP = O-phospho-L-homoserine + ADP + H(+). It participates in amino-acid biosynthesis; L-threonine biosynthesis; L-threonine from L-aspartate: step 4/5. Its function is as follows. Catalyzes the ATP-dependent phosphorylation of L-homoserine to L-homoserine phosphate. This Methanococcus maripaludis (strain DSM 14266 / JCM 13030 / NBRC 101832 / S2 / LL) protein is Homoserine kinase.